The sequence spans 91 residues: Small ribosomal subunit protein uS19 (91 aa).

This sequence belongs to the universal ribosomal protein uS19 family.

Protein S19 forms a complex with S13 that binds strongly to the 16S ribosomal RNA. The sequence is that of Small ribosomal subunit protein uS19 from Azoarcus sp. (strain BH72).